A 339-amino-acid chain; its full sequence is N-acetyl-gamma-glutamyl-phosphate reductase 1 (339 aa).

Cys149 is an active-site residue.

This sequence belongs to the NAGSA dehydrogenase family. Type 1 subfamily.

The protein resides in the cytoplasm. It carries out the reaction N-acetyl-L-glutamate 5-semialdehyde + phosphate + NADP(+) = N-acetyl-L-glutamyl 5-phosphate + NADPH + H(+). The protein operates within amino-acid biosynthesis; L-arginine biosynthesis; N(2)-acetyl-L-ornithine from L-glutamate: step 3/4. Its function is as follows. Catalyzes the NADPH-dependent reduction of N-acetyl-5-glutamyl phosphate to yield N-acetyl-L-glutamate 5-semialdehyde. This Lactiplantibacillus plantarum (strain ATCC BAA-793 / NCIMB 8826 / WCFS1) (Lactobacillus plantarum) protein is N-acetyl-gamma-glutamyl-phosphate reductase 1.